We begin with the raw amino-acid sequence, 140 residues long: Holo-[acyl-carrier-protein] synthase (140 aa).

Positions 8 and 57 each coordinate Mg(2+).

The protein belongs to the P-Pant transferase superfamily. AcpS family. The cofactor is Mg(2+).

The protein resides in the cytoplasm. The enzyme catalyses apo-[ACP] + CoA = holo-[ACP] + adenosine 3',5'-bisphosphate + H(+). Transfers the 4'-phosphopantetheine moiety from coenzyme A to a Ser of acyl-carrier-protein. The protein is Holo-[acyl-carrier-protein] synthase of Beijerinckia indica subsp. indica (strain ATCC 9039 / DSM 1715 / NCIMB 8712).